The following is a 395-amino-acid chain: Flap endonuclease 1 (395 aa).

The segment at 1–104 (MGIKHLYQII…GELAKRFMRK (104 aa)) is N-domain. A Mg(2+)-binding site is contributed by Asp34. The DNA site is built by Arg47 and Arg70. Mg(2+) is bound by residues Asp86, Glu158, Glu160, Asp179, and Asp181. The interval 122–253 (EVEKFSRRTV…NTALKLIRDH (132 aa)) is I-domain. Residue Glu158 coordinates DNA. Residues Gly231 and Asp233 each coordinate DNA. Asp233 contacts Mg(2+). An interaction with PCNA region spans residues 341-349 (QQSRLEGFF). The span at 360 to 389 (AVLKRKHEEKLELQKKKKKEDSKAKKEAKS) shows a compositional bias: basic and acidic residues. The disordered stretch occupies residues 360 to 395 (AVLKRKHEEKLELQKKKKKEDSKAKKEAKSKPRGTT).

It belongs to the XPG/RAD2 endonuclease family. FEN1 subfamily. Interacts with PCNA. Three molecules of FEN1 bind to one PCNA trimer with each molecule binding to one PCNA monomer. PCNA stimulates the nuclease activity without altering cleavage specificity. It depends on Mg(2+) as a cofactor. Phosphorylated. Phosphorylation upon DNA damage induces relocalization to the nuclear plasma.

It localises to the nucleus. The protein localises to the nucleolus. It is found in the nucleoplasm. The protein resides in the mitochondrion. Its function is as follows. Structure-specific nuclease with 5'-flap endonuclease and 5'-3' exonuclease activities involved in DNA replication and repair. During DNA replication, cleaves the 5'-overhanging flap structure that is generated by displacement synthesis when DNA polymerase encounters the 5'-end of a downstream Okazaki fragment. It enters the flap from the 5'-end and then tracks to cleave the flap base, leaving a nick for ligation. Also involved in the long patch base excision repair (LP-BER) pathway, by cleaving within the apurinic/apyrimidinic (AP) site-terminated flap. Acts as a genome stabilization factor that prevents flaps from equilibrating into structures that lead to duplications and deletions. Also possesses 5'-3' exonuclease activity on nicked or gapped double-stranded DNA, and exhibits RNase H activity. Also involved in replication and repair of rDNA and in repairing mitochondrial DNA. The polypeptide is Flap endonuclease 1 (Ajellomyces capsulatus (strain H143) (Darling's disease fungus)).